The sequence spans 322 residues: Phosphatidylserine decarboxylase proenzyme (322 aa).

Active-site charge relay system; for autoendoproteolytic cleavage activity residues include D90, H147, and S254. The Schiff-base intermediate with substrate; via pyruvic acid; for decarboxylase activity role is filled by S254. Pyruvic acid (Ser); by autocatalysis is present on S254. Positions 297–322 are disordered; sequence PAPLPAEEIKAEHDASPLVDNKKDDT. Residues 303-322 show a composition bias toward basic and acidic residues; it reads EEIKAEHDASPLVDNKKDDT.

It belongs to the phosphatidylserine decarboxylase family. PSD-B subfamily. Prokaryotic type I sub-subfamily. As to quaternary structure, heterodimer of a large membrane-associated beta subunit and a small pyruvoyl-containing alpha subunit. It depends on pyruvate as a cofactor. Post-translationally, is synthesized initially as an inactive proenzyme. Formation of the active enzyme involves a self-maturation process in which the active site pyruvoyl group is generated from an internal serine residue via an autocatalytic post-translational modification. Two non-identical subunits are generated from the proenzyme in this reaction, and the pyruvate is formed at the N-terminus of the alpha chain, which is derived from the carboxyl end of the proenzyme. The autoendoproteolytic cleavage occurs by a canonical serine protease mechanism, in which the side chain hydroxyl group of the serine supplies its oxygen atom to form the C-terminus of the beta chain, while the remainder of the serine residue undergoes an oxidative deamination to produce ammonia and the pyruvoyl prosthetic group on the alpha chain. During this reaction, the Ser that is part of the protease active site of the proenzyme becomes the pyruvoyl prosthetic group, which constitutes an essential element of the active site of the mature decarboxylase.

It is found in the cell membrane. It catalyses the reaction a 1,2-diacyl-sn-glycero-3-phospho-L-serine + H(+) = a 1,2-diacyl-sn-glycero-3-phosphoethanolamine + CO2. The protein operates within phospholipid metabolism; phosphatidylethanolamine biosynthesis; phosphatidylethanolamine from CDP-diacylglycerol: step 2/2. Catalyzes the formation of phosphatidylethanolamine (PtdEtn) from phosphatidylserine (PtdSer). This Salmonella typhi protein is Phosphatidylserine decarboxylase proenzyme.